Here is a 614-residue protein sequence, read N- to C-terminus: MLALKLQKKYPELTNEEILTLTDQFNKLDVDGKGYLDQPTTIKAFEDSKKGSYDEVREAIREVNVDSSGRVEPEDFVGIFNVLKKGVEGTEVKKGRITIKGSSSSVSHTINEEERREFIKHINSVLAGDPDVGSRVPINTETFEFFDQCKDGLILSKLINDSVPDTIDERVLNKQRNNKPLDNFKCIENNNVVINSAKAMGGISITNIGAGDILEGREHLILGLVWQIIRRGLLGKIDITLHPELYRLLEEDETLDQFLRLPPEKILLRWFNYHLKAANWPRTVSNFSKDVSDGENYTVLLNQLAPELCSRAPLQTTDVLQRAEQVLQNAEKLDCRKYLTPTAMVAGNPKLNLAFVAHLFNTHPGLEPLNEEEKPEIEPFDAEGEREARVFTLWLNSLDVTPSIHDFFNNLRDGLILLQAYDKITPNTVNWKKVNKAPASGDEMMRFKAVENCNYAVDLGKNQGFSLVGIQGADITDGSRTLTLALVWQMMRMNITKTLHSLSRGGKTLSDSDMVAWANSMAAKGGKGSQIRSFRDPSISTGVFVLDVLHGIKSEYVDYNLVTDGSTEELAIQNARLAISIARKLGAVIFILPEDIVAVRPRLVLHFIGSLMAV.

EF-hand domains lie at 16 to 50 and 51 to 86; these read EEIL…DSKK and GSYD…LKKG. Ca(2+)-binding residues include aspartate 29, aspartate 31, tyrosine 35, threonine 40, aspartate 66, serine 68, arginine 70, and aspartate 75. 2 actin-binding regions span residues 98 to 368 and 369 to 614; these read TIKG…GLEP and LNEE…LMAV. Calponin-homology (CH) domains follow at residues 112–233, 261–364, 385–495, and 508–614; these read EEER…RRGL, LPPE…NTHP, EREA…RMNI, and TLSD…LMAV.

It localises to the cytoplasm. It is found in the cytoskeleton. Its subcellular location is the actin patch. Its function is as follows. Binds to actin, and functionally associates with actin structures involved in the development and maintenance of cell polarity. Plays a role in cytokinesis. Plays important roles in mating and in spore formation. This is Fimbrin (fim1) from Schizosaccharomyces pombe (strain 972 / ATCC 24843) (Fission yeast).